The sequence spans 718 residues: Telomeric repeat-binding factor 2 (718 aa).

2 disordered regions span residues 1 to 22 and 219 to 286; these read MAAK…RSDD and NSER…GAPE. Basic and acidic residues-rich tracts occupy residues 8–22 and 219–228; these read AAME…RSDD and NSERAEEPKR. The tract at residues 24–220 is TRFH dimerization; it reads EQAVNRWVLQ…LVTMMKSLNS (197 aa). 15 tandem repeats follow at residues 257-269, 270-282, 283-295, 296-308, 309-321, 322-334, 335-347, 348-360, 361-373, 374-386, 387-399, 400-412, 413-425, 426-438, and 439-451. The 15 X 13 AA approximate tandem repeats stretch occupies residues 257–451; the sequence is GTLRRAETAG…EPMKSASYPT (195 aa). 2 disordered regions span residues 342–455 and 524–641; these read TARD…ASQP and FNKL…WSDE. Basic and acidic residues predominate over residues 405 to 425; the sequence is AERRKDLVRAPKRAETARDVV. Residues 533–543 show a composition bias toward polar residues; sequence PSPQQMSPSVS. The Nuclear localization signal signature appears at 545-550; sequence RTKRRK. A compositionally biased stretch (low complexity) spans 584 to 595; it reads SQCSKSSESPDS. Over residues 615–630 the composition is skewed to polar residues; the sequence is PVSTKRSSQQRWNSSY. The HTH myb-type domain occupies 664–717; the sequence is KKQKWTVQESEWIKDGVRKYGEGRWKTISEKYPFQNRTSVQIKDRYRTMKKLGI. Residues 688–713 constitute a DNA-binding region (H-T-H motif); sequence WKTISEKYPFQNRTSVQIKDRYRTMK.

Homodimer. Component of the shelterin complex (telosome). Interacts with TERF2IP/RAP1. As to expression, highly expressed in embryo.

It is found in the nucleus. It localises to the chromosome. The protein localises to the telomere. Its function is as follows. Binds the telomeric double-stranded 5'-TTAGGG-3' repeat and plays a central role in telomere maintenance and protection against end-to-end fusion of chromosomes. In addition to its telomeric DNA-binding role, required to recruit a number of factors and enzymes required for telomere protection, including the shelterin complex, TERF2IP/RAP1 and DCLRE1B/Apollo. Component of the shelterin complex (telosome) that is involved in the regulation of telomere length and protection. Shelterin associates with arrays of double-stranded 5'-TTAGGG-3' repeats added by telomerase and protects chromosome ends; without its protective activity, telomeres are no longer hidden from the DNA damage surveillance and chromosome ends are inappropriately processed by DNA repair pathways. Together with DCLRE1B/Apollo, plays a key role in telomeric loop (T loop) formation by generating 3' single-stranded overhang at the leading end telomeres: T loops have been proposed to protect chromosome ends from degradation and repair. Required both to recruit DCLRE1B/Apollo to telomeres and activate the exonuclease activity of DCLRE1B/Apollo. Together with DCLRE1B/Apollo, required to control the amount of DNA topoisomerase (TOP1, TOP2A and TOP2B) needed for telomere replication during fork passage and prevent aberrant telomere topology. Recruits TERF2IP/RAP1 to telomeres, thereby participating in to repressing homology-directed repair (HDR), which can affect telomere length. In Gallus gallus (Chicken), this protein is Telomeric repeat-binding factor 2 (TERF2).